A 134-amino-acid polypeptide reads, in one-letter code: D-ribose pyranase (134 aa).

Residue His-20 is the Proton donor of the active site. Residues Asp-28, His-101, and 123-125 each bind substrate; that span reads YSN.

Belongs to the RbsD / FucU family. RbsD subfamily. As to quaternary structure, homodecamer.

It localises to the cytoplasm. It catalyses the reaction beta-D-ribopyranose = beta-D-ribofuranose. It functions in the pathway carbohydrate metabolism; D-ribose degradation; D-ribose 5-phosphate from beta-D-ribopyranose: step 1/2. Catalyzes the interconversion of beta-pyran and beta-furan forms of D-ribose. This chain is D-ribose pyranase, found in Pseudomonas entomophila (strain L48).